The chain runs to 231 residues: Ribose-5-phosphate isomerase A (231 aa).

Residues 23-26, 80-83, and 93-96 each bind substrate; these read SGST, DGAD, and KGGG. Glu-102 acts as the Proton acceptor in catalysis. Lys-120 contacts substrate.

This sequence belongs to the ribose 5-phosphate isomerase family. As to quaternary structure, homodimer.

It carries out the reaction aldehydo-D-ribose 5-phosphate = D-ribulose 5-phosphate. Its pathway is carbohydrate degradation; pentose phosphate pathway; D-ribose 5-phosphate from D-ribulose 5-phosphate (non-oxidative stage): step 1/1. Catalyzes the reversible conversion of ribose-5-phosphate to ribulose 5-phosphate. The protein is Ribose-5-phosphate isomerase A of Prochlorococcus marinus subsp. pastoris (strain CCMP1986 / NIES-2087 / MED4).